Here is a 452-residue protein sequence, read N- to C-terminus: Pup--protein ligase (452 aa).

E9 serves as a coordination point for Mg(2+). An ATP-binding site is contributed by R53. Y55 serves as a coordination point for Mg(2+). D57 functions as the Proton acceptor in the catalytic mechanism. E63 contacts Mg(2+). Positions 66 and 419 each coordinate ATP.

Belongs to the Pup ligase/Pup deamidase family. Pup-conjugating enzyme subfamily.

It catalyses the reaction ATP + [prokaryotic ubiquitin-like protein]-L-glutamate + [protein]-L-lysine = ADP + phosphate + N(6)-([prokaryotic ubiquitin-like protein]-gamma-L-glutamyl)-[protein]-L-lysine.. It participates in protein degradation; proteasomal Pup-dependent pathway. The protein operates within protein modification; protein pupylation. Functionally, catalyzes the covalent attachment of the prokaryotic ubiquitin-like protein modifier Pup to the proteasomal substrate proteins, thereby targeting them for proteasomal degradation. This tagging system is termed pupylation. The ligation reaction involves the side-chain carboxylate of the C-terminal glutamate of Pup and the side-chain amino group of a substrate lysine. The protein is Pup--protein ligase of Salinispora arenicola (strain CNS-205).